Consider the following 362-residue polypeptide: Cobalt-precorrin-5B C(1)-methyltransferase (362 aa).

It belongs to the CbiD family.

The enzyme catalyses Co-precorrin-5B + S-adenosyl-L-methionine = Co-precorrin-6A + S-adenosyl-L-homocysteine. It functions in the pathway cofactor biosynthesis; adenosylcobalamin biosynthesis; cob(II)yrinate a,c-diamide from sirohydrochlorin (anaerobic route): step 6/10. Catalyzes the methylation of C-1 in cobalt-precorrin-5B to form cobalt-precorrin-6A. In Burkholderia cenocepacia (strain ATCC BAA-245 / DSM 16553 / LMG 16656 / NCTC 13227 / J2315 / CF5610) (Burkholderia cepacia (strain J2315)), this protein is Cobalt-precorrin-5B C(1)-methyltransferase.